The primary structure comprises 335 residues: HTH-type transcriptional regulator RipA (335 aa).

In terms of domain architecture, HTH araC/xylS-type spans 119–216; that stretch reads RKVAQKLIAY…GDTPSSFTSP (98 aa). 2 DNA-binding regions (H-T-H motif) span residues 136–157 and 183–206; these read LEFA…VAST and IGQV…KRHT.

Functionally, under iron limitation, represses the acn (aconitase), catA (catechol 1,2 dioxygenase), leuCD (isopropylmalate dehydratase), narKGHJI (nitrite/nitrate transporter and nitrate reductase), sdhCAB (succinate dehydrogenase), pta (phosphotransacetylase) and katA (catalase) genes. The sequence is that of HTH-type transcriptional regulator RipA from Corynebacterium diphtheriae (strain ATCC 700971 / NCTC 13129 / Biotype gravis).